Here is a 309-residue protein sequence, read N- to C-terminus: Olfactory receptor 2G3 (309 aa).

The Extracellular portion of the chain corresponds to 1–25 (MGLGNESSLMDFILLGFSDHPRLEA). The N-linked (GlcNAc...) asparagine glycan is linked to Asn5. Residues 26-49 (VLFVFVLFFYLLTLVGNFTIIIIS) form a helical membrane-spanning segment. At 50–57 (YLDPPLHT) the chain is on the cytoplasmic side. Residues 58-79 (PMYFFLSNLSLLDICFTTSLAP) form a helical membrane-spanning segment. Topologically, residues 80 to 100 (QTLVNLQRPKKTITYGGCVAQ) are extracellular. A disulfide bridge links Cys97 with Cys189. Residues 101–120 (LYISLALGSTECILLADMAL) traverse the membrane as a helical segment. At 121–139 (DRYIAVCKPLHYVVIMNPR) the chain is on the cytoplasmic side. The chain crosses the membrane as a helical span at residues 140–158 (LCQQLASISWLSGLASSLI). Residues 159-195 (HATFTLQLPLCGNHRLDHFICEVPALLKLACVDTTVN) lie on the Extracellular side of the membrane. Residues 196–219 (ELVLFVVSVLFVVIPPALISISYG) traverse the membrane as a helical segment. Residues 220-236 (FITQAVLRIKSVEARHK) are Cytoplasmic-facing. A helical transmembrane segment spans residues 237 to 259 (AFSTCSSHLTVVIIFYGTIIYVY). The Extracellular portion of the chain corresponds to 260–272 (LQPSDSYAQDQGK). The helical transmembrane segment at 273–292 (FISLFYTMVTPTLNPIIYTL) threads the bilayer. Residues 293-309 (RNKDMKEALRKLLSGKL) lie on the Cytoplasmic side of the membrane.

It belongs to the G-protein coupled receptor 1 family.

It localises to the cell membrane. In terms of biological role, odorant receptor. The polypeptide is Olfactory receptor 2G3 (OR2G3) (Homo sapiens (Human)).